We begin with the raw amino-acid sequence, 77 residues long: Large ribosomal subunit protein uL29 (77 aa).

It belongs to the universal ribosomal protein uL29 family.

This chain is Large ribosomal subunit protein uL29, found in Mycolicibacterium gilvum (strain PYR-GCK) (Mycobacterium gilvum (strain PYR-GCK)).